The primary structure comprises 91 residues: Elongation factor 1-beta (91 aa).

In terms of assembly, homodimer.

Promotes the exchange of GDP for GTP in EF-1-alpha/GDP, thus allowing the regeneration of EF-1-alpha/GTP that could then be used to form the ternary complex EF-1-alpha/GTP/AAtRNA. The sequence is that of Elongation factor 1-beta (ef1b) from Saccharolobus solfataricus (strain ATCC 35092 / DSM 1617 / JCM 11322 / P2) (Sulfolobus solfataricus).